The following is a 1068-amino-acid chain: Target of Nesh-SH3 (1068 aa).

The first 21 residues, 1-21, serve as a signal peptide directing secretion; the sequence is MLSSLGCLLLCGSITLALGNA. Asn37 is a glycosylation site (N-linked (GlcNAc...) asparagine). A Fibronectin type-III 1 domain is found at 116–214; that stretch reads KPLQLVVGTL…KIFNHKTVVG (99 aa). Disordered regions lie at residues 315 to 351 and 384 to 811; these read SKTP…DVSE and VFSS…SITD. Over residues 326–339 the composition is skewed to low complexity; sequence RPTTVTPETVPRST. Polar residues predominate over residues 340-351; it reads KPTTSSALDVSE. A compositionally biased stretch (low complexity) spans 447–462; that stretch reads QPTTPAPQQTTSIPST. A compositionally biased stretch (basic residues) spans 463–473; that stretch reads PKRRPRPKPPR. Residues 482 to 499 show a composition bias toward polar residues; sequence AGTITPKISKSPEPTWTT. The span at 532 to 544 shows a compositional bias: pro residues; that stretch reads RAPPKPKTSPRPR. Positions 562-574 are enriched in polar residues; that stretch reads PKTSPSPEVSYTT. Low complexity-rich tracts occupy residues 603–631 and 737–750; these read IPFI…STQE and PPLR…GTPL. Positions 802–811 are enriched in polar residues; the sequence is PDNSPCSITD. In terms of domain architecture, Fibronectin type-III 2 spans 833-926; that stretch reads PPTNLTVVTV…NTVAFSTESA (94 aa).

Probably interacts with ABI3. In terms of tissue distribution, expressed in brain, heart, lung, liver, pancreas kidney and placenta.

It is found in the secreted. This Homo sapiens (Human) protein is Target of Nesh-SH3.